Consider the following 215-residue polypeptide: Probable phosphoglycerate mutase GpmB (215 aa).

Residues 8–15 (RHGETQWN), 21–22 (QG), Arg-58, Lys-60, 82–85 (ELDM), 104–105 (RR), and 151–152 (GI) contribute to the substrate site. His-9 acts as the Tele-phosphohistidine intermediate in catalysis. Glu-82 (proton donor/acceptor) is an active-site residue.

The protein belongs to the phosphoglycerate mutase family. GpmB subfamily.

It carries out the reaction (2R)-2-phosphoglycerate = (2R)-3-phosphoglycerate. It participates in carbohydrate degradation; glycolysis; pyruvate from D-glyceraldehyde 3-phosphate: step 3/5. In Salmonella paratyphi A (strain AKU_12601), this protein is Probable phosphoglycerate mutase GpmB.